The primary structure comprises 769 residues: 5-methyltetrahydropteroyltriglutamate--homocysteine methyltransferase (769 aa).

5-methyltetrahydropteroyltri-L-glutamate is bound by residues 17-20 and lysine 118; that span reads RELK. L-homocysteine contacts are provided by residues 441 to 443 and glutamate 494; that span reads IGS. L-methionine contacts are provided by residues 441–443 and glutamate 494; that span reads IGS. 5-methyltetrahydropteroyltri-L-glutamate-binding positions include 525–526 and tryptophan 571; that span reads RC. Residue aspartate 609 coordinates L-homocysteine. L-methionine is bound at residue aspartate 609. Glutamate 615 is a binding site for 5-methyltetrahydropteroyltri-L-glutamate. Zn(2+) contacts are provided by histidine 651, cysteine 653, and glutamate 675. Histidine 705 serves as the catalytic Proton donor. Cysteine 737 lines the Zn(2+) pocket.

It belongs to the vitamin-B12 independent methionine synthase family. Zn(2+) serves as cofactor.

The enzyme catalyses 5-methyltetrahydropteroyltri-L-glutamate + L-homocysteine = tetrahydropteroyltri-L-glutamate + L-methionine. Its pathway is amino-acid biosynthesis; L-methionine biosynthesis via de novo pathway; L-methionine from L-homocysteine (MetE route): step 1/1. In terms of biological role, catalyzes the transfer of a methyl group from 5-methyltetrahydrofolate to homocysteine resulting in methionine formation. In Blochmanniella floridana, this protein is 5-methyltetrahydropteroyltriglutamate--homocysteine methyltransferase.